A 27-amino-acid polypeptide reads, in one-letter code: uncharacterized protein (27 aa).

Residues 6–26 (IIVLGALIALLELIRFLLQLL) form a helical membrane-spanning segment.

This sequence belongs to the DinQ family.

It localises to the cell inner membrane. This is an uncharacterized protein from Escherichia coli (strain K12).